Reading from the N-terminus, the 234-residue chain is uncharacterized protein (234 aa).

6 helical membrane passes run 5–23 (LFYISAIFVPEAIWLLWSF), 38–60 (IPTAYVTAFISGDALLAVIGFWV), 73–92 (AHIQWIAGYFAFFFVLAHGW), 127–149 (AITLYAMALPTIVPMIAGGYIWL), 170–192 (GVAIYLLGVFVAFLMAACATVIS), and 197–217 (TQAGMLVGVIVTITVAYALAF).

The protein localises to the cell membrane. This is an uncharacterized protein from Archaeoglobus fulgidus (strain ATCC 49558 / DSM 4304 / JCM 9628 / NBRC 100126 / VC-16).